We begin with the raw amino-acid sequence, 322 residues long: Cytochrome c biogenesis protein CcsA (322 aa).

Transmembrane regions (helical) follow at residues 9–29 (ILTH…LITL), 43–63 (GMIA…IYSG), 70–90 (LYES…VPKI), 142–162 (MLLS…LLVI), 226–246 (VISL…VWAN), 259–274 (ETWA…IYSH), and 287–307 (AIVA…VNLL).

This sequence belongs to the CcmF/CycK/Ccl1/NrfE/CcsA family. As to quaternary structure, may interact with Ccs1.

The protein localises to the plastid. Its subcellular location is the chloroplast thylakoid membrane. Functionally, required during biogenesis of c-type cytochromes (cytochrome c6 and cytochrome f) at the step of heme attachment. The sequence is that of Cytochrome c biogenesis protein CcsA from Chloranthus spicatus (Chulantree).